Reading from the N-terminus, the 171-residue chain is Peptide deformylase (171 aa).

Residues Cys91 and His133 each contribute to the Fe cation site. Glu134 is a catalytic residue. His137 is a Fe cation binding site.

It belongs to the polypeptide deformylase family. It depends on Fe(2+) as a cofactor.

The enzyme catalyses N-terminal N-formyl-L-methionyl-[peptide] + H2O = N-terminal L-methionyl-[peptide] + formate. Functionally, removes the formyl group from the N-terminal Met of newly synthesized proteins. Requires at least a dipeptide for an efficient rate of reaction. N-terminal L-methionine is a prerequisite for activity but the enzyme has broad specificity at other positions. This is Peptide deformylase from Edwardsiella ictaluri (strain 93-146).